The following is a 520-amino-acid chain: Probable cytosol aminopeptidase (520 aa).

Mn(2+)-binding residues include Lys232 and Asp237. The active site involves Lys244. Positions 255, 314, and 316 each coordinate Mn(2+). Arg318 is an active-site residue. The disordered stretch occupies residues 488 to 520; it reads KAKKSTAKKATTKKTTTRKTASKTKSTKSKARK.

It belongs to the peptidase M17 family. Mn(2+) is required as a cofactor.

The protein localises to the cytoplasm. The enzyme catalyses Release of an N-terminal amino acid, Xaa-|-Yaa-, in which Xaa is preferably Leu, but may be other amino acids including Pro although not Arg or Lys, and Yaa may be Pro. Amino acid amides and methyl esters are also readily hydrolyzed, but rates on arylamides are exceedingly low.. The catalysed reaction is Release of an N-terminal amino acid, preferentially leucine, but not glutamic or aspartic acids.. Presumably involved in the processing and regular turnover of intracellular proteins. Catalyzes the removal of unsubstituted N-terminal amino acids from various peptides. This chain is Probable cytosol aminopeptidase (pepA), found in Metamycoplasma salivarium (Mycoplasma salivarium).